Here is a 319-residue protein sequence, read N- to C-terminus: ATP-dependent 6-phosphofructokinase (319 aa).

Residue glycine 11 participates in ATP binding. Position 21 to 25 (21 to 25) interacts with ADP; it reads RAVVR. Residues 72 to 73 and 102 to 105 contribute to the ATP site; these read RS and GDGS. Residue aspartate 103 participates in Mg(2+) binding. 125-127 is a binding site for substrate; the sequence is TID. Catalysis depends on aspartate 127, which acts as the Proton acceptor. Arginine 154 contributes to the ADP binding site. Substrate is bound by residues arginine 162 and 169–171; that span reads MGR. Residues 185 to 187 and 213 to 215 contribute to the ADP site; these read GAE and KMH. Substrate-binding positions include glutamate 222, arginine 243, and 249 to 252; that span reads HIQR.

This sequence belongs to the phosphofructokinase type A (PFKA) family. ATP-dependent PFK group I subfamily. Prokaryotic clade 'B1' sub-subfamily. As to quaternary structure, homotetramer. Mg(2+) is required as a cofactor.

The protein localises to the cytoplasm. It carries out the reaction beta-D-fructose 6-phosphate + ATP = beta-D-fructose 1,6-bisphosphate + ADP + H(+). Its pathway is carbohydrate degradation; glycolysis; D-glyceraldehyde 3-phosphate and glycerone phosphate from D-glucose: step 3/4. Allosterically activated by ADP and other diphosphonucleosides, and allosterically inhibited by phosphoenolpyruvate. Catalyzes the phosphorylation of D-fructose 6-phosphate to fructose 1,6-bisphosphate by ATP, the first committing step of glycolysis. The protein is ATP-dependent 6-phosphofructokinase of Clostridium tetani (strain Massachusetts / E88).